The following is a 276-amino-acid chain: Large ribosomal subunit protein uL2 (276 aa).

The tract at residues 223–276 (GVAMNPVDHPHGGGEGRGKGHHPTSPWGLPTKGYKTRRGKRPSDKFIVRRRNEA) is disordered. 2 stretches are compositionally biased toward basic and acidic residues: residues 230 to 240 (DHPHGGGEGRG) and 263 to 276 (RPSD…RNEA).

It belongs to the universal ribosomal protein uL2 family. In terms of assembly, part of the 50S ribosomal subunit. Forms a bridge to the 30S subunit in the 70S ribosome.

One of the primary rRNA binding proteins. Required for association of the 30S and 50S subunits to form the 70S ribosome, for tRNA binding and peptide bond formation. It has been suggested to have peptidyltransferase activity; this is somewhat controversial. Makes several contacts with the 16S rRNA in the 70S ribosome. The chain is Large ribosomal subunit protein uL2 from Thermotoga petrophila (strain ATCC BAA-488 / DSM 13995 / JCM 10881 / RKU-1).